The sequence spans 559 residues: Urocanate hydratase (559 aa).

NAD(+) contacts are provided by residues 49-50, Gln-127, 173-175, Asp-193, Arg-198, 239-240, 260-264, 270-271, and Tyr-319; these read GG, GMG, NA, QTSAH, and YL. Residue Cys-407 is part of the active site. Gly-489 contacts NAD(+).

The protein belongs to the urocanase family. NAD(+) is required as a cofactor.

It localises to the cytoplasm. The enzyme catalyses 4-imidazolone-5-propanoate = trans-urocanate + H2O. The protein operates within amino-acid degradation; L-histidine degradation into L-glutamate; N-formimidoyl-L-glutamate from L-histidine: step 2/3. Catalyzes the conversion of urocanate to 4-imidazolone-5-propionate. This is Urocanate hydratase from Shouchella clausii (strain KSM-K16) (Alkalihalobacillus clausii).